Reading from the N-terminus, the 324-residue chain is Probable metal transport system membrane protein CPn_0346/CP_0414/CPj0346/CpB0353 (324 aa).

Helical transmembrane passes span 1–21, 39–59, 64–84, 94–114, 125–145, 165–185, 201–221, 226–246, 252–272, and 286–306; these read MALG…SVFF, IQII…TFLV, AMYA…VCLF, GTLT…IYFI, STAL…VFMT, EDIF…IFAF, LGIP…ACLV, AVGV…AKVI, SLMA…PASS, and SGIS…ISYF.

This sequence belongs to the ABC-3 integral membrane protein family.

The protein localises to the cell inner membrane. Part of an ATP-driven transport system CPn_0346/CPn_0347/CPn_0348/CPn_0349 for a metal. This chain is Probable metal transport system membrane protein CPn_0346/CP_0414/CPj0346/CpB0353, found in Chlamydia pneumoniae (Chlamydophila pneumoniae).